The following is a 428-amino-acid chain: Monocarboxylate transporter 13 (428 aa).

The Cytoplasmic segment spans residues 1-10 (MVHRTEPPDG). A run of 12 helical transmembrane segments spans residues 11–31 (GWGW…FGVL), 52–72 (VSWI…IGSA), 81–101 (PVVM…SFAT), 106–126 (LYLS…TPTL), 139–159 (LAMG…APLF), 172–192 (LLLV…LRPL), 221–241 (VALT…VAHL), 244–264 (LGWD…SDLV), 283–303 (LLML…VAQA), 309–329 (VLAV…FSVI), 338–358 (IYCG…LGAP), and 374–394 (FVVA…LPHF). Residues 395 to 428 (FSCISLSTSRPQDLVIEAPDTKIPLPKEEGLGEN) lie on the Cytoplasmic side of the membrane.

It belongs to the major facilitator superfamily. Monocarboxylate porter (TC 2.A.1.13) family.

Its subcellular location is the golgi apparatus membrane. The protein localises to the cell membrane. Functionally, proton-linked monocarboxylate transporter. May catalyze the transport of monocarboxylates across the plasma membrane. This chain is Monocarboxylate transporter 13 (Slc16a13), found in Rattus norvegicus (Rat).